A 163-amino-acid chain; its full sequence is 3-isopropylmalate dehydratase small subunit (163 aa).

It belongs to the LeuD family. LeuD type 2 subfamily. In terms of assembly, heterodimer of LeuC and LeuD.

It carries out the reaction (2R,3S)-3-isopropylmalate = (2S)-2-isopropylmalate. The protein operates within amino-acid biosynthesis; L-leucine biosynthesis; L-leucine from 3-methyl-2-oxobutanoate: step 2/4. Functionally, catalyzes the isomerization between 2-isopropylmalate and 3-isopropylmalate, via the formation of 2-isopropylmaleate. The protein is 3-isopropylmalate dehydratase small subunit of Brachyspira hyodysenteriae (strain ATCC 49526 / WA1).